Here is a 262-residue protein sequence, read N- to C-terminus: Versicolorin reductase 1 (262 aa).

4 residues coordinate NADP(+): Ile21, Asp67, Asn94, and Arg127. Residues Ser143 and Ser144 each act as proton donor in the active site. NADP(+)-binding residues include Tyr158, Lys162, Ile191, and Thr193. The Proton acceptor role is filled by Tyr158. Lys162 (lowers pKa of active site Tyr) is an active-site residue.

It belongs to the short-chain dehydrogenases/reductases (SDR) family.

Its subcellular location is the cytoplasm. The protein resides in the cytosol. It catalyses the reaction (4S,8R)-2,13,16,20-tetrahydroxy-7,9-dioxapentacyclo[10.8.0.0(3,10).0(4,8).0(14,19)]icosa-1(12),2,5,10,13,16,19-heptaen-18-one + NADPH + H(+) = (4S,8R,16R)-2,13,16,20-tetrahydroxy-7,9-dioxapentacyclo[10.8.0.0(3,10).0(4,8).0(14,19)]icosa-1(12),2,5,10,13,19-hexaen-18-one + NADP(+). The protein operates within mycotoxin biosynthesis; aflatoxin biosynthesis. Its function is as follows. Cytochrome P450 monooxygenase; part of the gene cluster that mediates the biosynthesis of aflatoxins, a group of polyketide-derived furanocoumarins, and part of the most toxic and carcinogenic compounds among the known mycotoxins. The four major aflatoxins produced by A.parasiticus are aflatoxin B1 (AFB1), aflatoxin B2 (AFB2), aflatoxin G1 (AFG1) and aflatoxin G2 (AFG2). Within the aflatoxin pathway, with the cytochrome P450 monooxygenase aflN, the versicolorin reductase aflM, is involved in conversion of VERA to demethylsterigmatocystin (DMST). The biosynthesis of aflatoxins begins with the norsolorinic acid synthase aflC that combines a hexanoyl starter unit produced by the fatty acid synthase aflA/aflB and 7 malonyl-CoA extender units to synthesize the precursor NOR. The second step is the conversion of NOR to averantin and requires the norsolorinic acid ketoreductase aflD, which catalyzes the dehydration of norsolorinic acid to form (1'S)-averantin. The norsolorinic acid reductases aflE and aflF may also play a role in the conversion of NOR to AVN. The cytochrome P450 monooxygenase aflG then catalyzes the hydroxylation of AVN to 5'hydroxyaverantin (HAVN). The next step is performed by the 5'-hydroxyaverantin dehydrogenase aflH that transforms HAVN to 5'-oxoaverantin (OAVN) which is further converted to averufin (AVF) by aflK that plays a dual role in the pathway, as a 5'-oxoaverantin cyclase that mediates conversion of 5'-oxoaverantin, as well as a versicolorin B synthase in a later step in the pathway. The averufin oxidase aflI catalyzes the conversion of AVF to versiconal hemiacetal acetate (VHA). VHA is then the substrate for the versiconal hemiacetal acetate esterase aflJ to yield versiconal (VAL). Versicolorin B synthase aflK then converts VAL to versicolorin B (VERB) by closing the bisfuran ring of aflatoxin which is required for DNA-binding, thus giving to aflatoxin its activity as a mutagen. Then, the activity of the versicolorin B desaturase aflL leads to versicolorin A (VERA). A branch point starts from VERB since it can also be converted to dihydrodemethylsterigmatocystin (DMDHST), probably also by aflL, VERA being a precursor for aflatoxins B1 and G1, and DMDHST for aflatoxins B2 and G2. Next, the versicolorin reductase aflM and the cytochrome P450 monooxygenase aflN are involved in conversion of VERA to demethylsterigmatocystin (DMST). AflX and aflY seem also involved in this step, through probable aflX-mediated epoxide ring-opening step following versicolorin A oxidation and aflY-mediated Baeyer-Villiger oxidation required for the formation of the xanthone ring. The methyltransferase aflO then leads to the modification of DMST to sterigmatocystin (ST), and of DMDHST to dihydrosterigmatocystin (DHST). Both ST and DHST are then substrates of the O-methyltransferase aflP to yield O-methylsterigmatocystin (OMST) and dihydro-O-methylsterigmatocystin (DHOMST), respectively. Finally OMST is converted to aflatoxins B1 and G1, and DHOMST to aflatoxins B2 and G2, via the action of several enzymes including O-methylsterigmatocystin oxidoreductase aflQ, the cytochrome P450 monooxygenase aflU, but also the NADH-dependent flavin oxidoreductase nadA which is specifically required for the synthesis of AFG1. The polypeptide is Versicolorin reductase 1 (Aspergillus parasiticus (strain ATCC 56775 / NRRL 5862 / SRRC 143 / SU-1)).